The chain runs to 118 residues: Protein TusC (118 aa).

This sequence belongs to the DsrF/TusC family. Heterohexamer, formed by a dimer of trimers. The hexameric TusBCD complex contains 2 copies each of TusB, TusC and TusD. The TusBCD complex interacts with TusE.

Its subcellular location is the cytoplasm. Functionally, part of a sulfur-relay system required for 2-thiolation of 5-methylaminomethyl-2-thiouridine (mnm(5)s(2)U) at tRNA wobble positions. The sequence is that of Protein TusC from Salmonella typhi.